The primary structure comprises 259 residues: MPRLHDHVWSYPSAGAARPYSLPRGMIAAALCPQGPGAPEPEPAPRGQREGTAGFSARPGSWHHDLVQRSLVLFSFGVVLALVLNLLQIQRNVTLFPDEVIATIFSSAWWVPPCCGTAAAVVGLLYPCIDSHLGEPHKFKREWASVMRCIAVFVGINHASAKLDFANNVQLSLTLAALSLGLWWTFDRSRSGLGLGITIAFLATLITQFLVYNGVYQYTSPDFLYIRSWLPCIFFSGGVTVGNIGRQLAMGVPEKPHSD.

Residues 1–66 (MPRLHDHVWS…ARPGSWHHDL (66 aa)) lie on the Cytoplasmic side of the membrane. A disordered region spans residues 33–57 (PQGPGAPEPEPAPRGQREGTAGFSA). A helical transmembrane segment spans residues 67-89 (VQRSLVLFSFGVVLALVLNLLQI). Residues 90-108 (QRNVTLFPDEVIATIFSSA) lie on the Extracellular side of the membrane. A helical membrane pass occupies residues 109–126 (WWVPPCCGTAAAVVGLLY). Topologically, residues 127–141 (PCIDSHLGEPHKFKR) are cytoplasmic. Glycyl lysine isopeptide (Lys-Gly) (interchain with G-Cter in ubiquitin) cross-links involve residues K138 and K140. The helical transmembrane segment at 142-164 (EWASVMRCIAVFVGINHASAKLD) threads the bilayer. The Extracellular portion of the chain corresponds to 165–167 (FAN). A helical membrane pass occupies residues 168–186 (NVQLSLTLAALSLGLWWTF). At 187–191 (DRSRS) the chain is on the cytoplasmic side. Position 189 is a phosphoserine (S189). The helical transmembrane segment at 192–213 (GLGLGITIAFLATLITQFLVYN) threads the bilayer. Over 214–227 (GVYQYTSPDFLYIR) the chain is Extracellular. A helical transmembrane segment spans residues 228–245 (SWLPCIFFSGGVTVGNIG). At 246 to 259 (RQLAMGVPEKPHSD) the chain is on the cytoplasmic side. The KxHxx motif lies at 253–259 (PEKPHSD).

The protein belongs to the INSIG family. As to quaternary structure, interacts with SCAP; interaction is direct and only takes place in the presence of sterols; it prevents interaction between SCAP and the coat protein complex II (COPII). Associates with the SCAP-SREBP complex (composed of SCAP and SREBF1/SREBP1 or SREBF2/SREBP2); association is mediated via its interaction with SCAP and only takes place in the presence of sterols. Interaction with SCAP is mutually exclusive with PAQR3. Interacts with HMGCR (via its SSD); the interaction, accelerated by sterols, leads to the recruitment of HMGCR to AMFR/gp78 for its ubiquitination by the sterol-mediated ERAD pathway. Interacts with AMFR/gp78 (via its membrane domain); the interaction recruits HMCR at the ER membrane for its ubiquitination and degradation by the sterol-mediated ERAD pathway. Interacts with SOAT2/ACAT2; leading to promote recruitment of AMFR/gp78 and subsequent ubiquitination of SOAT2/ACAT2. Interacts with RNF139. Interacts with RNF145. Phosphorylation at Ser-189 by PCK1 reduces binding to oxysterol, disrupting the interaction between INSIG1 and SCAP, thereby promoting nuclear translocation of SREBP proteins (SREBF1/SREBP1 or SREBF2/SREBP2) and subsequent transcription of downstream lipogenesis-related genes. Post-translationally, ubiquitinated by AMFR/gp78 in response to sterol deprivation, leading to its degradation: when the SCAP-SREBP complex becomes dissociated from INSIG1, INSIG1 is then ubiquitinated and degraded in proteasomes. Although ubiquitination is required for rapid INSIG1 degradation, it is not required for release of the SCAP-SREBP complex. Ubiquitinated by RNF139. Highly expressed in liver and kidney.

It is found in the endoplasmic reticulum membrane. Oxysterol-binding protein that mediates feedback control of cholesterol synthesis by controlling both endoplasmic reticulum to Golgi transport of SCAP and degradation of HMGCR. Acts as a negative regulator of cholesterol biosynthesis by mediating the retention of the SCAP-SREBP complex in the endoplasmic reticulum, thereby blocking the processing of sterol regulatory element-binding proteins (SREBPs) SREBF1/SREBP1 and SREBF2/SREBP2. Binds oxysterol, including 25-hydroxycholesterol, regulating interaction with SCAP and retention of the SCAP-SREBP complex in the endoplasmic reticulum. In presence of oxysterol, interacts with SCAP, retaining the SCAP-SREBP complex in the endoplasmic reticulum, thereby preventing SCAP from escorting SREBF1/SREBP1 and SREBF2/SREBP2 to the Golgi. Sterol deprivation or phosphorylation by PCK1 reduce oxysterol-binding, disrupting the interaction between INSIG1 and SCAP, thereby promoting Golgi transport of the SCAP-SREBP complex, followed by processing and nuclear translocation of SREBF1/SREBP1 and SREBF2/SREBP2. Also regulates cholesterol synthesis by regulating degradation of HMGCR: initiates the sterol-mediated ubiquitin-mediated endoplasmic reticulum-associated degradation (ERAD) of HMGCR via recruitment of the reductase to the ubiquitin ligases AMFR/gp78 and/or RNF139. Also regulates degradation of SOAT2/ACAT2 when the lipid levels are low: initiates the ubiquitin-mediated degradation of SOAT2/ACAT2 via recruitment of the ubiquitin ligases AMFR/gp78. The sequence is that of Insulin-induced gene 1 protein from Rattus norvegicus (Rat).